Reading from the N-terminus, the 490-residue chain is Keratin, type II cytoskeletal 8 (490 aa).

The segment covering 1–27 has biased composition (polar residues); sequence MSIRVTQKSYKMSTSGPRAFSSRSFTS. The tract at residues 1 to 48 is disordered; the sequence is MSIRVTQKSYKMSTSGPRAFSSRSFTSGPGARISSSSFSRVGSSSSSF. The segment at 1-96 is head; sequence MSIRVTQKSY…DPNIQAVRTQ (96 aa). Serine 9 carries the phosphoserine; by PKC/PRKCE modification. Residue lysine 11 forms a Glycyl lysine isopeptide (Lys-Gly) (interchain with G-Cter in SUMO2) linkage. Phosphoserine is present on residues serine 13, serine 15, serine 21, and serine 22. Arginine 23 is modified (omega-N-methylarginine). Serine 24 carries the post-translational modification Phosphoserine; by PKC/PRKCE. Phosphothreonine is present on threonine 26. Serine 27 carries the post-translational modification Phosphoserine. Omega-N-methylarginine is present on arginine 32. Phosphoserine occurs at positions 34, 37, and 39. Positions 34–48 are enriched in low complexity; that stretch reads SSSSFSRVGSSSSSF. Arginine 40 carries the omega-N-methylarginine modification. Serine 43, serine 44, and serine 47 each carry phosphoserine. Arginine 49 carries the post-translational modification Asymmetric dimethylarginine; alternate. Arginine 49 carries the post-translational modification Omega-N-methylarginine; alternate. The residue at position 51 (serine 51) is a Phosphoserine. Serine 80 is modified (phosphoserine; by MAPK). Residues 97-132 form a coil 1A region; that stretch reads EKEQIKSLNNKFASFIDKVRFLEQQNKMLETKWSLL. Residues 97–408 enclose the IF rod domain; that stretch reads EKEQIKSLNN…KLLEGEESRL (312 aa). Lysine 107 carries the N6-malonyllysine modification. Residues lysine 128 and lysine 136 each participate in a glycyl lysine isopeptide (Lys-Gly) (interchain with G-Cter in SUMO2) cross-link. The segment at 133-149 is linker 1; the sequence is QQQKTSRSNMDNMFESY. The segment at 150-241 is coil 1B; that stretch reads INNLRRQLEA…QIHEEEIREL (92 aa). Lysine 203 participates in a covalent cross-link: Glycyl lysine isopeptide (Lys-Gly) (interchain with G-Cter in SUMO1); alternate. Residue lysine 203 forms a Glycyl lysine isopeptide (Lys-Gly) (interchain with G-Cter in SUMO2); alternate linkage. Lysine 213 bears the N6-acetyllysine mark. The interval 242–265 is linker 12; the sequence is QSQISDTSVVLSMDNSRSLDMDGI. Phosphoserine occurs at positions 259 and 280. Residues 266–403 form a coil 2 region; it reads IAEVRAQYED…ITTYRKLLEG (138 aa). The necessary for interaction with PNN stretch occupies residues 267–387; it reads AEVRAQYEDI…REYQELMNVK (121 aa). Lysine 291 participates in a covalent cross-link: Glycyl lysine isopeptide (Lys-Gly) (interchain with G-Cter in SUMO2). Lysine 301 is covalently cross-linked (Glycyl lysine isopeptide (Lys-Gly) (interchain with G-Cter in SUMO2); alternate). N6-acetyllysine; alternate is present on lysine 301. Lysine 310 participates in a covalent cross-link: Glycyl lysine isopeptide (Lys-Gly) (interchain with G-Cter in SUMO2). Residue lysine 331 forms a Glycyl lysine isopeptide (Lys-Gly) (interchain with G-Cter in SUMO2); alternate linkage. Lysine 331 bears the N6-acetyllysine; alternate mark. At serine 336 the chain carries Phosphoserine. Residue lysine 399 forms a Glycyl lysine isopeptide (Lys-Gly) (interchain with G-Cter in SUMO2) linkage. The interval 404 to 490 is tail; that stretch reads EESRLESGMQ…VSESSDVVSK (87 aa). Phosphoserine is present on residues serine 406, serine 410, serine 416, serine 423, serine 430, serine 432, and serine 438. Lysine 479 participates in a covalent cross-link: Glycyl lysine isopeptide (Lys-Gly) (interchain with G-Cter in SUMO1); alternate. A Glycyl lysine isopeptide (Lys-Gly) (interchain with G-Cter in SUMO2); alternate cross-link involves residue lysine 479. Phosphoserine occurs at positions 482, 484, 485, and 489.

It belongs to the intermediate filament family. In terms of assembly, heterotetramer of two type I and two type II keratins. Forms a heterodimer with KRT18. Associates with KRT20. Interacts with PLEC isoform 1C, when in a heterodimer with KRT18. Interacts with PNN. When associated with KRT19, interacts with DMD. Interacts with TCHP. Interacts with APEX1. Interacts with GPER1. Interacts with EPPK1. Interacts with PKP1 and PKP2. Post-translationally, phosphorylation on serine residues is enhanced during EGF stimulation and mitosis. Ser-80 phosphorylation plays an important role in keratin filament reorganization. In terms of processing, O-glycosylated. O-GlcNAcylation at multiple sites increases solubility, and decreases stability by inducing proteasomal degradation. O-glycosylated (O-GlcNAcylated), in a cell cycle-dependent manner. Expressed in abundance in the epithelia of colon, bladder, ileum, and stomach, with lower expression observed in earskin (at protein level). Also expressed in pancreas, liver, dudenum and jejunum.

Its subcellular location is the cytoplasm. The protein localises to the nucleus. The protein resides in the nucleoplasm. It localises to the nucleus matrix. Together with KRT19, helps to link the contractile apparatus to dystrophin at the costameres of striated muscle. This is Keratin, type II cytoskeletal 8 (Krt8) from Mus musculus (Mouse).